The following is a 252-amino-acid chain: Octanoyltransferase (252 aa).

Residues 56-237 form the BPL/LPL catalytic domain; it reads ADTGDEIWLV…RLIANLDGAS (182 aa). Residues 96 to 103, 168 to 170, and 181 to 183 each bind substrate; these read RGGQITYH, ALG, and GLS. Residue Cys-199 is the Acyl-thioester intermediate of the active site.

This sequence belongs to the LipB family.

It is found in the cytoplasm. The catalysed reaction is octanoyl-[ACP] + L-lysyl-[protein] = N(6)-octanoyl-L-lysyl-[protein] + holo-[ACP] + H(+). Its pathway is protein modification; protein lipoylation via endogenous pathway; protein N(6)-(lipoyl)lysine from octanoyl-[acyl-carrier-protein]: step 1/2. Catalyzes the transfer of endogenously produced octanoic acid from octanoyl-acyl-carrier-protein onto the lipoyl domains of lipoate-dependent enzymes. Lipoyl-ACP can also act as a substrate although octanoyl-ACP is likely to be the physiological substrate. In Burkholderia lata (strain ATCC 17760 / DSM 23089 / LMG 22485 / NCIMB 9086 / R18194 / 383), this protein is Octanoyltransferase.